Consider the following 231-residue polypeptide: MRENRPVIALDFPTLEDVKAFLAKFPADEKLYVKIGMELYYAAGPEIVRYVKELGHSVFLDLKLHDIPNTVKSAMRVLSNLGVDMTNVHAAGGVEMMKAAREGLGEGPILIAVTQLTSTSEEQMRDFQNIQTTLQESVVHYAQKTAEAGLNGVVCSAHEVAKIKEATNQDFVCLTPGIRPAGAAVGDQKRVMTPDDAHQIGSDYIVVGRPITQAEDPVAAYHDIKAQWNDQ.

Residues D11, K34, 61–70, T117, R179, Q188, G208, and R209 each bind substrate; that span reads DLKLHDIPNT. K63 acts as the Proton donor in catalysis.

This sequence belongs to the OMP decarboxylase family. Type 1 subfamily. As to quaternary structure, homodimer.

The catalysed reaction is orotidine 5'-phosphate + H(+) = UMP + CO2. It participates in pyrimidine metabolism; UMP biosynthesis via de novo pathway; UMP from orotate: step 2/2. Functionally, catalyzes the decarboxylation of orotidine 5'-monophosphate (OMP) to uridine 5'-monophosphate (UMP). The protein is Orotidine 5'-phosphate decarboxylase of Streptococcus thermophilus (strain CNRZ 1066).